The sequence spans 417 residues: Serine hydroxymethyltransferase (417 aa).

Residues leucine 122 and 126-128 (GHL) each bind (6S)-5,6,7,8-tetrahydrofolate. Lysine 230 bears the N6-(pyridoxal phosphate)lysine mark. A (6S)-5,6,7,8-tetrahydrofolate-binding site is contributed by 355–357 (SPF).

This sequence belongs to the SHMT family. As to quaternary structure, homodimer. Requires pyridoxal 5'-phosphate as cofactor.

The protein resides in the cytoplasm. The catalysed reaction is (6R)-5,10-methylene-5,6,7,8-tetrahydrofolate + glycine + H2O = (6S)-5,6,7,8-tetrahydrofolate + L-serine. The protein operates within one-carbon metabolism; tetrahydrofolate interconversion. It participates in amino-acid biosynthesis; glycine biosynthesis; glycine from L-serine: step 1/1. Its function is as follows. Catalyzes the reversible interconversion of serine and glycine with tetrahydrofolate (THF) serving as the one-carbon carrier. This reaction serves as the major source of one-carbon groups required for the biosynthesis of purines, thymidylate, methionine, and other important biomolecules. Also exhibits THF-independent aldolase activity toward beta-hydroxyamino acids, producing glycine and aldehydes, via a retro-aldol mechanism. The sequence is that of Serine hydroxymethyltransferase from Francisella tularensis subsp. mediasiatica (strain FSC147).